The primary structure comprises 146 residues: MYRFKIYYPGKTKAKFIKEGIDHYIKLLSPFAKVELIELKEGHGDKEKVTEEESKTILNSLKGDFILLHRDGKSLSSTEFADFIKDKSLTQFVIGGVYGVNEAVFKAASFRLSLSSLTFTHEISRLLLLEQLYRAITIIHGKSYHY.

Residues L68, G95, and 114–119 (LSSLTF) each bind S-adenosyl-L-methionine.

The protein belongs to the RNA methyltransferase RlmH family. Homodimer.

The protein resides in the cytoplasm. The enzyme catalyses pseudouridine(1915) in 23S rRNA + S-adenosyl-L-methionine = N(3)-methylpseudouridine(1915) in 23S rRNA + S-adenosyl-L-homocysteine + H(+). In terms of biological role, specifically methylates the pseudouridine at position 1915 (m3Psi1915) in 23S rRNA. In Thermodesulfovibrio yellowstonii (strain ATCC 51303 / DSM 11347 / YP87), this protein is Ribosomal RNA large subunit methyltransferase H.